The sequence spans 2035 residues: Ral GTPase-activating protein subunit alpha-1 (2035 aa).

Residues 343–384 (LVSREESKNDTVDKADKTAEPEQSHSNTSTLTEREPSSSSLC) are disordered. The span at 345 to 365 (SREESKNDTVDKADKTAEPEQ) shows a compositional bias: basic and acidic residues. Residues 366-384 (SHSNTSTLTEREPSSSSLC) show a composition bias toward polar residues. A phosphoserine mark is found at S710 and S720. A disordered region spans residues 714 to 754 (SFSRGWSRDQPGQAPMRQRSATTTGSPGTEKARSIVRQKTV). T753 carries the post-translational modification Phosphothreonine. A Phosphoserine modification is found at S772. Residue T777 is modified to Phosphothreonine. S796 bears the Phosphoserine mark. A compositionally biased stretch (basic and acidic residues) spans 807–817 (ERAKVNKEDTS). 2 disordered regions span residues 807-834 (ERAK…SANV) and 848-911 (SGNA…SHSD). Composition is skewed to polar residues over residues 824–833 (NSETGGSSAN) and 849–862 (GNAS…SSPG). Phosphoserine occurs at positions 859, 860, and 863. Low complexity predominate over residues 894–911 (SPASAGSSDLMSSDSHSD). Phosphoserine is present on residues S985, S989, S993, and S999. Residues 986–1008 (ESASPVHSALGSRSQTPSPSTLN) form a disordered region. Phosphothreonine is present on T1001. 2 positions are modified to phosphoserine: S1003 and S1477. Residues 1326–2034 (FTNKTVAHVA…PYHHFPADAD (709 aa)) are minimal domain that binds to TCF3/E12. Positions 1713–1746 (SEKQENDVINAILKQYTEEKEFVEKHFNDLNMKA) form a coiled coil. Positions 1795–2003 (LRNLDSRQCR…EERARYLQTI (209 aa)) constitute a Rap-GAP domain.

In terms of assembly, component of the heterodimeric RalGAP1 complex with RALGAPB. Heterodimerization is required for activity. Interacts with the HLH region of TCF3/isoform E12. As to expression, highly expressed in brain, thymus and testis with lower levels in lung and spleen and barely detectable in heart or liver (at protein level).

It is found in the cytoplasm. The protein localises to the nucleus. Its function is as follows. Catalytic subunit of the heterodimeric RalGAP1 complex which acts as a GTPase activator for the Ras-like small GTPases RALA and RALB. This Rattus norvegicus (Rat) protein is Ral GTPase-activating protein subunit alpha-1 (Ralgapa1).